We begin with the raw amino-acid sequence, 366 residues long: tRNA(Met) cytidine acetate ligase (366 aa).

ATP-binding positions include 7-20, Gly-96, Asn-152, and Arg-175; that span reads IAEF…HQYL.

It belongs to the TmcAL family.

It localises to the cytoplasm. The catalysed reaction is cytidine(34) in elongator tRNA(Met) + acetate + ATP = N(4)-acetylcytidine(34) in elongator tRNA(Met) + AMP + diphosphate. Its function is as follows. Catalyzes the formation of N(4)-acetylcytidine (ac(4)C) at the wobble position of elongator tRNA(Met), using acetate and ATP as substrates. First activates an acetate ion to form acetyladenylate (Ac-AMP) and then transfers the acetyl group to tRNA to form ac(4)C34. This is tRNA(Met) cytidine acetate ligase from Streptococcus equi subsp. zooepidemicus (strain MGCS10565).